Consider the following 390-residue polypeptide: Ammonium/H(+) antiporter subunit AmhT (390 aa).

Transmembrane regions (helical) follow at residues 2–22 (VIPE…TGFV), 31–51 (VVIF…SHLL), 52–72 (HFAG…EFPL), 94–114 (FGVT…SLII), 143–163 (FMLG…AVLV), 178–198 (LLVV…VFLF), 212–232 (DLFI…ALYL), 266–286 (LLLP…EGIP), 288–308 (IPLL…VGVL), and 351–371 (VFIL…PSIA).

The protein belongs to the monovalent cation:proton antiporter 2 (CPA2) transporter (TC 2.A.37) family. In terms of assembly, interacts with AmhM.

The protein resides in the cell membrane. With respect to regulation, amhT alone exhibits antiport activity, but interaction with AmhM confers different properties, such as higher KM for potassium. Its function is as follows. Ammonium/proton antiporter that mediates the efflux of ammonium ions. Can also transport potassium or rubidium, but not sodium or lithium. The chain is Ammonium/H(+) antiporter subunit AmhT (amhT) from Alkalihalophilus pseudofirmus (strain ATCC BAA-2126 / JCM 17055 / OF4) (Bacillus pseudofirmus).